The following is a 141-amino-acid chain: Large ribosomal subunit protein uL16 (141 aa).

Belongs to the universal ribosomal protein uL16 family. As to quaternary structure, part of the 50S ribosomal subunit.

In terms of biological role, binds 23S rRNA and is also seen to make contacts with the A and possibly P site tRNAs. This chain is Large ribosomal subunit protein uL16, found in Microchaete diplosiphon (Fremyella diplosiphon).